A 182-amino-acid chain; its full sequence is Protein SrpB (182 aa).

Transmembrane regions (helical) follow at residues 11-31 (WLGL…IGLN), 43-63 (TFTL…QAEG), 73-93 (LSRT…GLIL), and 116-136 (IWIT…LGLI).

It belongs to the MgtC/SapB family.

It localises to the cell membrane. The polypeptide is Protein SrpB (srpB) (Synechococcus elongatus (strain ATCC 33912 / PCC 7942 / FACHB-805) (Anacystis nidulans R2)).